We begin with the raw amino-acid sequence, 586 residues long: Phosphatidylinositol-3-phosphatase SAC1-B (586 aa).

At 1–519 (MASTYNSFNL…TPLHEPKDWK (519 aa)) the chain is on the cytoplasmic side. The SAC domain maps to 121-450 (LNSVLNTDGF…ANACAKQYAG (330 aa)). Residues 451 to 586 (TGALKTDFTR…PRLVQKEKMD (136 aa)) form an essential for phosphatidylinositol-4-phosphate phosphatase activity region. The chain crosses the membrane as a helical span at residues 520-540 (FLTLPIIMVVAFSMCIICLLM). The Lumenal portion of the chain corresponds to 541–547 (AGDTWTE). Residues 548–568 (TLAYVLFWGSASVVTGGVILF) traverse the membrane as a helical segment. At 569 to 586 (NGRDFVDAPRLVQKEKMD) the chain is on the cytoplasmic side.

It is found in the endoplasmic reticulum membrane. Its subcellular location is the golgi apparatus membrane. The catalysed reaction is a 1,2-diacyl-sn-glycero-3-phospho-(1D-myo-inositol-3-phosphate) + H2O = a 1,2-diacyl-sn-glycero-3-phospho-(1D-myo-inositol) + phosphate. The enzyme catalyses a 1,2-diacyl-sn-glycero-3-phospho-(1D-myo-inositol 4-phosphate) + H2O = a 1,2-diacyl-sn-glycero-3-phospho-(1D-myo-inositol) + phosphate. Its function is as follows. Phosphoinositide phosphatase which catalyzes the hydrolysis of phosphatidylinositol 4-phosphate (PtdIns(4)P), phosphatidylinositol 3-phosphate (PtdIns(3)P) and has low activity towards phosphatidylinositol-3,5-bisphosphate (PtdIns(3,5)P2). This is Phosphatidylinositol-3-phosphatase SAC1-B (sacm1lb) from Danio rerio (Zebrafish).